A 1072-amino-acid polypeptide reads, in one-letter code: Error-prone DNA polymerase (1072 aa).

It belongs to the DNA polymerase type-C family. DnaE2 subfamily.

It localises to the cytoplasm. The catalysed reaction is DNA(n) + a 2'-deoxyribonucleoside 5'-triphosphate = DNA(n+1) + diphosphate. Functionally, DNA polymerase involved in damage-induced mutagenesis and translesion synthesis (TLS). It is not the major replicative DNA polymerase. This chain is Error-prone DNA polymerase, found in Burkholderia pseudomallei (strain K96243).